The chain runs to 498 residues: POU domain protein 2, isoform A (498 aa).

Positions 1–30 are enriched in low complexity; sequence MMVLQQQQQQRLWDATTTSNTNTQTQQSAN. A disordered region spans residues 1 to 35; that stretch reads MMVLQQQQQQRLWDATTTSNTNTQTQQSANVESTP. Residues S72, S211, S215, S217, and S219 each carry the phosphoserine modification. The interval 191-273 is disordered; that stretch reads QMKQQQREDP…STPKPTSGLT (83 aa). Low complexity predominate over residues 207–222; it reads PLAKSPLRSPSLSPVP. A compositionally biased stretch (polar residues) spans 228 to 251; it reads QQRTPPNSMTANSLGMSSAVMTPN. Over residues 252–270 the composition is skewed to low complexity; sequence TPSMQQQPQLQQSTPKPTS. The region spanning 286–360 is the POU-specific domain; that stretch reads EETTDLEELE…LLQKWLEDAD (75 aa). Positions 391–450 form a DNA-binding region, homeobox; that stretch reads RRKKRTSIETTVRTTLEKAFLMNCKPTSEEISQLSERLNMDKEVIRVWFCNRRQKEKRIN.

The protein belongs to the POU transcription factor family. Class-2 subfamily. As to expression, initial expression in cellular blastoderm stage, then in ectodermal stripes during germband extension. Broad expression in the neuroectoderm followed by limitation to discrete subsets of CNS cells, and expression in specific PNS neurons and support cells.

It is found in the nucleus. In terms of biological role, DNA-binding regulatory protein implicated in early development. Involved in neuronal cell fate decision. May act as an octamer-dependent activator of transcription. Could also play an early role in specific ectodermal cells, and a subsequent role in the embryonic nervous system. In Drosophila melanogaster (Fruit fly), this protein is POU domain protein 2, isoform A (pdm2).